An 828-amino-acid chain; its full sequence is Class I hydrophobin hum3 (828 aa).

Positions 1–22 are cleaved as a signal peptide; that stretch reads MKYLQFLAAVAAVSAFSGPVLA. Asn-156, Asn-222, and Asn-738 each carry an N-linked (GlcNAc...) asparagine glycan. 4 disulfide bridges follow: Cys-750/Cys-808, Cys-757/Cys-802, Cys-758/Cys-788, and Cys-809/Cys-822. A glycan (N-linked (GlcNAc...) asparagine) is linked at Asn-811.

It in the C-terminal section; belongs to the fungal hydrophobin family. Self-assembles to form functional amyloid fibrils called rodlets. Self-assembly into fibrillar rodlets occurs spontaneously at hydrophobic:hydrophilic interfaces and the rodlets further associate laterally to form amphipathic monolayers. In terms of processing, hum3 is an atypical hydrophobin that consists in a repetitive repellent-like region that spans 578 aa which is separated from a hydrophobin-like domain by a spacer region containing three possible kex2 processing sites. The repetitive region contains 17 amphipathic repeats of 31-36 aa each of them with a C-terminal putative kex2 processing motif.

It is found in the secreted. Its subcellular location is the cell wall. In terms of biological role, aerial growth, conidiation, and dispersal of filamentous fungi in the environment rely upon a capability of their secreting small amphipathic proteins called hydrophobins (HPBs) with low sequence identity. Class I can self-assemble into an outermost layer of rodlet bundles on aerial cell surfaces, conferring cellular hydrophobicity that supports fungal growth, development and dispersal; whereas Class II form highly ordered films at water-air interfaces through intermolecular interactions but contribute nothing to the rodlet structure. Atypical class I hydrophobin that is preceded by a signal sequence and 17 imperfect repeats. The repeated peptides might function as repellents whereas the class I hydrophobin seems not to be crucial for the formation of aerial hyphae. Hydrophobins of Mycosarcoma maydis have been functionally replaced, at least partially, by repellents. Hum3 and rsp1 together are pathogenicity proteins that share an essential function in early stages of the infection. This Mycosarcoma maydis (Corn smut fungus) protein is Class I hydrophobin hum3.